The following is a 124-amino-acid chain: Holo-[acyl-carrier-protein] synthase (124 aa).

Residues aspartate 5 and glutamate 51 each coordinate Mg(2+).

The protein belongs to the P-Pant transferase superfamily. AcpS family. Mg(2+) serves as cofactor.

The protein localises to the cytoplasm. It catalyses the reaction apo-[ACP] + CoA = holo-[ACP] + adenosine 3',5'-bisphosphate + H(+). Transfers the 4'-phosphopantetheine moiety from coenzyme A to a Ser of acyl-carrier-protein. The chain is Holo-[acyl-carrier-protein] synthase from Hydrogenobaculum sp. (strain Y04AAS1).